A 79-amino-acid chain; its full sequence is Acyl carrier protein (79 aa).

The region spanning 2–79 (ASKEEILAGL…QDAVDFIXGA (78 aa)) is the Carrier domain. S40 bears the O-(pantetheine 4'-phosphoryl)serine mark.

It belongs to the acyl carrier protein (ACP) family. In terms of processing, 4'-phosphopantetheine is transferred from CoA to a specific serine of apo-ACP by AcpS. This modification is essential for activity because fatty acids are bound in thioester linkage to the sulfhydryl of the prosthetic group.

It localises to the cytoplasm. Its pathway is lipid metabolism; fatty acid biosynthesis. Carrier of the growing fatty acid chain in fatty acid biosynthesis. The polypeptide is Acyl carrier protein (Myxococcus xanthus).